A 154-amino-acid chain; its full sequence is ORF3b protein (154 aa).

The tract at residues 80 to 138 (LQTLVLKMLHSSSLTSLLKTHRMCKYTQSTALQELLIQQWIQFMMSRRRLLACLCKHKK) is mitochondrial targeting signal. The interval 134 to 154 (CKHKKVSTNLCTHSFRKKQVR) is nucleolar targeting. A Bipartite nuclear localization signal motif is present at residues 135-153 (KHKKVSTNLCTHSFRKKQV).

Interacts with host RUNX1 isoform b.

Its subcellular location is the host nucleus. The protein localises to the host nucleolus. The protein resides in the host mitochondrion. Functionally, induces host cell G0/G1 arrest and apoptosis. The protein is ORF3b protein of Homo sapiens (Human).